Here is a 1074-residue protein sequence, read N- to C-terminus: Carbamoyl phosphate synthase large chain (1074 aa).

Residues 1–399 are carboxyphosphate synthetic domain; that stretch reads MPKRSDIKKV…ALMKAIRSLD (399 aa). Positions 129, 169, 175, 176, 208, 210, 215, 241, 242, 243, 284, and 296 each coordinate ATP. One can recognise an ATP-grasp 1 domain in the interval 133–325; that stretch reads KKAMERIGEP…IARVTAKIAI (193 aa). Mg(2+) is bound by residues Gln284, Glu296, and Asn298. Gln284, Glu296, and Asn298 together coordinate Mn(2+). The tract at residues 400-543 is oligomerization domain; the sequence is IDIDLGYNGK…YSTYDEECEL (144 aa). The interval 544-933 is carbamoyl phosphate synthetic domain; that stretch reads NPSDNKKVLI…FKAEMSAENN (390 aa). The 192-residue stretch at 674-865 folds into the ATP-grasp 2 domain; the sequence is NKLLNKLGIP…LAKIAAKVMA (192 aa). Arg710, Asp749, Leu751, Glu756, Gly781, Ile782, His783, Ser784, Gln824, and Glu836 together coordinate ATP. 3 residues coordinate Mg(2+): Gln824, Glu836, and Asn838. 3 residues coordinate Mn(2+): Gln824, Glu836, and Asn838. The region spanning 932–1074 is the MGS-like domain; the sequence is NNLPLDGIVF…YHREVRYRAL (143 aa). The tract at residues 934 to 1074 is allosteric domain; sequence LPLDGIVFIS…YHREVRYRAL (141 aa).

It belongs to the CarB family. In terms of assembly, composed of two chains; the small (or glutamine) chain promotes the hydrolysis of glutamine to ammonia, which is used by the large (or ammonia) chain to synthesize carbamoyl phosphate. Tetramer of heterodimers (alpha,beta)4. Mg(2+) is required as a cofactor. It depends on Mn(2+) as a cofactor.

It catalyses the reaction hydrogencarbonate + L-glutamine + 2 ATP + H2O = carbamoyl phosphate + L-glutamate + 2 ADP + phosphate + 2 H(+). The enzyme catalyses hydrogencarbonate + NH4(+) + 2 ATP = carbamoyl phosphate + 2 ADP + phosphate + 2 H(+). Its pathway is amino-acid biosynthesis; L-arginine biosynthesis; carbamoyl phosphate from bicarbonate: step 1/1. It functions in the pathway pyrimidine metabolism; UMP biosynthesis via de novo pathway; (S)-dihydroorotate from bicarbonate: step 1/3. In terms of biological role, large subunit of the glutamine-dependent carbamoyl phosphate synthetase (CPSase). CPSase catalyzes the formation of carbamoyl phosphate from the ammonia moiety of glutamine, carbonate, and phosphate donated by ATP, constituting the first step of 2 biosynthetic pathways, one leading to arginine and/or urea and the other to pyrimidine nucleotides. The large subunit (synthetase) binds the substrates ammonia (free or transferred from glutamine from the small subunit), hydrogencarbonate and ATP and carries out an ATP-coupled ligase reaction, activating hydrogencarbonate by forming carboxy phosphate which reacts with ammonia to form carbamoyl phosphate. This Methanothrix thermoacetophila (strain DSM 6194 / JCM 14653 / NBRC 101360 / PT) (Methanosaeta thermophila) protein is Carbamoyl phosphate synthase large chain.